Reading from the N-terminus, the 175-residue chain is MSASSTEATNLAGKTCLITGGAGGLGRALAAAFLRAGANVAICDLNEERLKQASAELSGTGAGSLLAANADVADPAAAQQLFDRITAKFRTVDVLVNNAAIMDRFDPVADLDHELWDRVISVNLAGPFIFSKLALRVMLQQPKPDGCILNIASGAAKGGWLAGRCDLGLARICRG.

Residues Ile-18, Asp-71, Asn-98, and Lys-132 each contribute to the NADP(+) site.

The protein belongs to the short-chain dehydrogenases/reductases (SDR) family.

It participates in secondary metabolite biosynthesis; terpenoid biosynthesis. In terms of biological role, short chain dehydrogenase/reductase; part of the gene cluster that mediates the biosynthesis of diterpenoid pyrones. The first step of the pathway is the synthesis of the alpha-pyrone moiety by the polyketide synthase dpmpA via condensation of one acetyl-CoA starter unit with 3 malonyl-CoA units and 2 methylations. The alpha-pyrone is then combined with geranylgeranyl pyrophosphate (GGPP) formed by the GGPP synthase dpmpD through the action of the prenyltransferase dpmpC to yield a linear alpha-pyrone diterpenoid. Subsequent steps in the diterpenoid pyrone biosynthetic pathway involve the decalin core formation, which is initiated by the epoxidation of the C10-C11 olefin by the FAD-dependent oxidoreductase dpmpE, and is followed by a cyclization cascade catalyzed by the terpene cyclase dpmpB. The short chain dehydrogenase/reductase dpmpG then oxidizes the 8S hydroxy group to a ketone and the short chain dehydrogenase/reductase dpmpH reduces the ketone to the 8R hydroxy group to yield higginsianin B. Higginsianin B is further methylated by the methyltransferase dpmpI to produce the intermediate named FDDP B. The cytochrome P450 monooxygenase dpmpJ then oxidizes the C-26 methyl to primary alcohol, producing the final diterpenoid pyrone with a C-26 primary alcohol on the gamma-pyrone moiety named FDDP C. The sequence is that of Short chain dehydrogenase/reductase dpmpG from Macrophomina phaseolina (strain MS6) (Charcoal rot fungus).